The following is a 146-amino-acid chain: Superoxide dismutase [Mn] 2 (146 aa).

Mn(2+) is bound by residues His-42, Asp-126, and His-130.

Belongs to the iron/manganese superoxide dismutase family. The cofactor is Mn(2+).

It carries out the reaction 2 superoxide + 2 H(+) = H2O2 + O2. Destroys superoxide anion radicals which are normally produced within the cells and which are toxic to biological systems. This is Superoxide dismutase [Mn] 2 (sod2) from Haloferax mediterranei (Halobacterium mediterranei).